We begin with the raw amino-acid sequence, 386 residues long: ATP phosphoribosyltransferase regulatory subunit (386 aa).

Belongs to the class-II aminoacyl-tRNA synthetase family. HisZ subfamily. As to quaternary structure, heteromultimer composed of HisG and HisZ subunits.

It is found in the cytoplasm. The protein operates within amino-acid biosynthesis; L-histidine biosynthesis; L-histidine from 5-phospho-alpha-D-ribose 1-diphosphate: step 1/9. In terms of biological role, required for the first step of histidine biosynthesis. May allow the feedback regulation of ATP phosphoribosyltransferase activity by histidine. This is ATP phosphoribosyltransferase regulatory subunit from Limosilactobacillus fermentum (strain NBRC 3956 / LMG 18251) (Lactobacillus fermentum).